Reading from the N-terminus, the 456-residue chain is UDP-N-acetylmuramoylalanine--D-glutamate ligase (456 aa).

113–119 (GTNGKTT) serves as a coordination point for ATP.

It belongs to the MurCDEF family.

It is found in the cytoplasm. The catalysed reaction is UDP-N-acetyl-alpha-D-muramoyl-L-alanine + D-glutamate + ATP = UDP-N-acetyl-alpha-D-muramoyl-L-alanyl-D-glutamate + ADP + phosphate + H(+). It functions in the pathway cell wall biogenesis; peptidoglycan biosynthesis. Cell wall formation. Catalyzes the addition of glutamate to the nucleotide precursor UDP-N-acetylmuramoyl-L-alanine (UMA). The sequence is that of UDP-N-acetylmuramoylalanine--D-glutamate ligase from Crocosphaera subtropica (strain ATCC 51142 / BH68) (Cyanothece sp. (strain ATCC 51142)).